The sequence spans 1530 residues: Regulating synaptic membrane exocytosis protein 2 (1530 aa).

Residues 1-34 are disordered; sequence MSAPLGPRGRPAPTPAASQPPPQPEMPDLSHLTE. Residues 10–25 are compositionally biased toward pro residues; that stretch reads RPAPTPAASQPPPQPE. The 169-residue stretch at 26–194 folds into the RabBD domain; the sequence is MPDLSHLTEE…TKSGAWFYNS (169 aa). The FYVE-type zinc-finger motif lies at 126 to 182; sequence KGDAPTCGICHKTKFADGCGHNCSYCQTKFCARCGGRVSLRSNKVMWVCNLCRKQQE. Cysteine 132, cysteine 135, cysteine 148, cysteine 151, cysteine 156, cysteine 159, cysteine 174, and cysteine 177 together coordinate Zn(2+). Disordered regions lie at residues 195–608 and 632–655; these read GSNT…ERQK and SGVD…HPVT. Basic and acidic residues-rich tracts occupy residues 210–225, 327–338, 357–375, 391–410, and 419–443; these read LRNE…KLHE, EPGHLNYRDSNR, RDEY…RYRS, EQMR…RHSD, and EDSR…RRAA. Serine 409 is modified (phosphoserine). Residues 458-472 are compositionally biased toward polar residues; that stretch reads AQGQSSYPQRTSNHS. Residues 484–501 are compositionally biased toward basic and acidic residues; the sequence is DRPDMRRADSLRKQHHLD. A compositionally biased stretch (polar residues) spans 519 to 530; that stretch reads RNDSLSSDQSES. The segment covering 537-546 has biased composition (basic residues); the sequence is RPHKSKKGGK. Acidic residues predominate over residues 567 to 577; it reads SCDDVELESES. Composition is skewed to basic and acidic residues over residues 578-592 and 643-653; these read VSEK…RKTS and NEEHSHSDKHP. The region spanning 677-763 is the PDZ domain; that stretch reads DGSVPRDSGA…EPQVELVVSR (87 aa). Threonine 698 bears the Phosphothreonine mark. The disordered stretch occupies residues 771–802; that stretch reads IPDSTHAQLESSSSSFESQKMDRPSISVTSPM. 2 positions are modified to phosphoserine: serine 800 and serine 803. The C2 1 domain occupies 814 to 937; sequence LSGQLSIKLW…ALLDDEPHWY (124 aa). 6 disordered regions span residues 948 to 982, 1003 to 1122, 1130 to 1149, 1154 to 1187, 1242 to 1263, and 1282 to 1307; these read PLPR…SEVS, LQSS…ERSA, RQMK…RLEQ, KYRS…SRTS, SLEK…TSGK, and KSRS…QRST. Positions 1003 to 1024 are enriched in polar residues; that stretch reads LQSSTLSVPEQVMSSNHCSPSG. Over residues 1067–1086 the composition is skewed to basic and acidic residues; that stretch reads RMDRHRVMDDHYSSDRDRSH. Residues 1088-1101 are compositionally biased toward polar residues; that stretch reads RTGSVQTSPSSTPG. At serine 1095 the chain carries Phosphoserine. The segment covering 1154–1165 has biased composition (basic and acidic residues); it reads KYRSGWDPHRGA. Phosphoserine is present on serine 1175. Over residues 1178–1187 the composition is skewed to low complexity; that stretch reads SDVSAVSRTS. Serine 1251 carries the phosphoserine modification. Positions 1376–1494 constitute a C2 2 domain; the sequence is AMGDIQVGMM…ELSNMVIGWF (119 aa). Serine 1515 and serine 1518 each carry phosphoserine.

In terms of assembly, interacts with TSPOAP1 and RIMBP2. Interacts with PPFIA3 and PPFIA4. Interacts via its zinc finger with the first C2 domain of UNC13A. Forms a complex consisting of UNC13A, RIMS2 and RAB3A. Heterodimer with PCLO. Part of a ternary complex involving PCLO and EPAC2. Interacts with RAB3A and RAB3B that have been activated by GTP-binding. Interacts with RAB3C, RAB3D and RAB26. In terms of tissue distribution, detected in testis, pituitary and an insulinoma cell line. Detected at low levels in cerebellar cortex.

It is found in the synapse. Its subcellular location is the synaptosome. In terms of biological role, rab effector involved in exocytosis. May act as scaffold protein. Plays a role in dendrite formation by melanocytes. The chain is Regulating synaptic membrane exocytosis protein 2 (Rims2) from Mus musculus (Mouse).